A 630-amino-acid chain; its full sequence is A-type voltage-gated potassium channel KCND2 (630 aa).

At 1–184 (MAAGVAAWLP…FENPHTSTMA (184 aa)) the chain is on the cytoplasmic side. Residues 2–20 (AAGVAAWLPFARAAAIGWM) form an interaction with KCNIP1, KCNIP2, and other family members region. Thr-38 carries the post-translational modification Phosphothreonine. The interaction with KCNIP1 stretch occupies residues 71 to 90 (ERDFFYHPETQQYFFDRDPD). His-105, Cys-111, Cys-132, and Cys-133 together coordinate Zn(2+). A helical membrane pass occupies residues 185–206 (LVFYYVTGFFIAVSVIANVVET). Residues 207–226 (VPCGSSPGHIKELPCGERYA) lie on the Extracellular side of the membrane. Residues 227–249 (VAFFCLDTACVMIFTVEYLLRLA) traverse the membrane as a helical segment. The Cytoplasmic segment spans residues 250-256 (AAPSRYR). Residues 257-281 (FVRSVMSIIDVVAILPYYIGLVMTD) form a helical membrane-spanning segment. The Extracellular portion of the chain corresponds to 282-287 (NEDVSG). A helical; Voltage-sensor transmembrane segment spans residues 288–307 (AFVTLRVFRVFRIFKFSRHS). Topologically, residues 308-321 (QGLRILGYTLKSCA) are cytoplasmic. The S4-S5 linker stretch occupies residues 308–321 (QGLRILGYTLKSCA). A helical membrane pass occupies residues 322–345 (SELGFLLFSLTMAIIIFATVMFYA). At 346–357 (EKGSSASKFTSI) the chain is on the extracellular side. The helical intramembrane region spans 358 to 369 (PAAFWYTIVTMT). K(+)-binding residues include Thr-370, Leu-371, Gly-372, and Tyr-373. The Selectivity filter signature appears at 370 to 375 (TLGYGD). An intramembrane segment occupies 370–377 (TLGYGDMV). At 378–380 (PKT) the chain is on the extracellular side. Residues 381–403 (IAGKIFGSICSLSGVLVIALPVP) form a helical membrane-spanning segment. At 404–630 (VIVSNFSRIY…GGNIVRVSAL (227 aa)) the chain is on the cytoplasmic side. At Ser-438 the chain carries Phosphoserine. The required for dendritic targeting stretch occupies residues 474-489 (FETQHHHLLHCLEKTT). Positions 474–630 (FETQHHHLLH…GGNIVRVSAL (157 aa)) are important for normal channel activation and inactivation, for interaction with KCNIP2, and probably other family members as well. A phosphoserine mark is found at Ser-548, Ser-552, Ser-572, and Ser-575. The segment at 600-623 (IPTPPVTTPEGDDRPESPEYSGGN) is disordered. A phosphothreonine mark is found at Thr-602 and Thr-607. Ser-616 is subject to Phosphoserine. The PDZ-binding motif lies at 627–630 (VSAL).

The protein belongs to the potassium channel family. D (Shal) (TC 1.A.1.2) subfamily. Kv4.2/KCND2 sub-subfamily. Homotetramer or heterotetramer with KCND1 or KCND3. Associates with the regulatory subunits KCNIP1, KCNIP2, KCNIP3 and KCNIP4. Interacts with DPP6, DPP10, DLG4 and DLG1. In vivo, probably exists as heteromeric complex containing variable proportions of KCND1, KCND2, KCND3, KCNIP1, KCNIP2, KCNIP3, KCNIP4, DPP6 and DPP10. The tetrameric channel can associate with up to four regulatory subunits, such as KCNIP2 or KCNIP4. Interaction with KCNIP3 promotes tetramerization and formation of a functional potassium channel. Interaction with four KCNIP4 chains does not reduce interaction with DPP10. Probably part of a complex consisting of KCNIP1, KCNIP2 isoform 3 and KCND2. Interacts with FLNA and FLNC. Interacts with NCS1/FREQ. Identified in a complex with cAMP-dependent protein kinase (PKA), CAV3, AKAP6 and KCND3 in cardiac myocytes. Interacts (via S1 and S2 helices) with DPP6; this interaction stabilizes the conformation of the S1-S2 helices and facilitates S4 conformational change, including S4 sliding up and down, thereby accelerating activation, inactivation, and recovery. In terms of processing, phosphorylation at Ser-438 in response to MAPK activation is increased in stimulated dendrites. Interaction with KCNIP2 and DPP6 propomtes phosphorylation by PKA at Ser-552. Phosphorylation at Ser-552 has no effect on interaction with KCNIP3, but is required for the regulation of channel activity by KCNIP3. Phosphorylation at Ser-552 leads to KCND2 internalization. Phosphorylated by MAPK in response to signaling via the metabotropic glutamate receptor GRM5. Phosphorylation at Ser-616 is required for the down-regulation of neuronal A-type currents in response to signaling via GRM5. In terms of tissue distribution, detected in brain frontal cortex.

The protein localises to the cell membrane. The protein resides in the cell projection. It is found in the dendrite. Its subcellular location is the synapse. It localises to the perikaryon. The protein localises to the postsynaptic cell membrane. The protein resides in the dendritic spine. It is found in the sarcolemma. Its subcellular location is the cell junction. It localises to the membrane. The protein localises to the caveola. The enzyme catalyses K(+)(in) = K(+)(out). In terms of biological role, voltage-gated potassium channel that mediates transmembrane potassium transport in excitable membranes, primarily in the brain. Mediates the major part of the dendritic A-type current I(SA) in brain neurons. This current is activated at membrane potentials that are below the threshold for action potentials. It regulates neuronal excitability, prolongs the latency before the first spike in a series of action potentials, regulates the frequency of repetitive action potential firing, shortens the duration of action potentials and regulates the back-propagation of action potentials from the neuronal cell body to the dendrites. Contributes to the regulation of the circadian rhythm of action potential firing in suprachiasmatic nucleus neurons, which regulates the circadian rhythm of locomotor activity. Functions downstream of the metabotropic glutamate receptor GRM5 and plays a role in neuronal excitability and in nociception mediated by activation of GRM5. Mediates the transient outward current I(to) in rodent heart left ventricle apex cells, but not in human heart, where this current is mediated by another family member. Forms tetrameric potassium-selective channels through which potassium ions pass in accordance with their electrochemical gradient. The channel alternates between opened and closed conformations in response to the voltage difference across the membrane. Can form functional homotetrameric channels and heterotetrameric channels that contain variable proportions of KCND2 and KCND3; channel properties depend on the type of pore-forming alpha subunits that are part of the channel. In vivo, membranes probably contain a mixture of heteromeric potassium channel complexes. Interaction with specific isoforms of the regulatory subunits KCNIP1, KCNIP2, KCNIP3 or KCNIP4 strongly increases expression at the cell surface and thereby increases channel activity; it modulates the kinetics of channel activation and inactivation, shifts the threshold for channel activation to more negative voltage values, shifts the threshold for inactivation to less negative voltages and accelerates recovery after inactivation. Likewise, interaction with DPP6 or DPP10 promotes expression at the cell membrane and regulates both channel characteristics and activity. Upon depolarization, the channel goes from a resting closed state (C state) to an activated but non-conducting state (C* state), from there, the channel may either inactivate (I state) or open (O state). This Oryctolagus cuniculus (Rabbit) protein is A-type voltage-gated potassium channel KCND2.